The primary structure comprises 131 residues: MAGIKALISLSFGGAIGLMFLMLGCALPIYNQYWPLFVLFFYILSPIPYCIARRLVDDTDAMSNACKELAIFLTTGIVVSAFGLPIVFARANLIEWGACALVLTGNTVIFATILGFFLVFGSNDDFSWQQW.

Helical transmembrane passes span 7–27 (LISL…GCAL), 32–52 (QYWP…YCIA), 69–89 (LAIF…IVFA), and 100–120 (ALVL…FLVF).

The protein belongs to the OB-RGRP/VPS55 family.

It localises to the membrane. Negatively regulates growth hormone (GH) receptor cell surface expression in liver. May play a role in liver resistance to GH during periods of reduced nutrient availability. The protein is Leptin receptor overlapping transcript-like 1 (LEPROTL1) of Bos taurus (Bovine).